The chain runs to 883 residues: Probable ribonuclease ZC3H12C (883 aa).

2 disordered regions span residues 53–109 (QLSP…ISVE) and 139–158 (DFKP…PPDV). Ser230 carries the phosphoserine modification. One can recognise an RNase NYN domain in the interval 245–400 (LRPIVIDGSN…LGRHGPSLDN (156 aa)). The C3H1-type zinc-finger motif lies at 410 to 435 (EHKKQPCPYGKKCTYGHKCKYYHPER). Disordered regions lie at residues 456–551 (AKTA…FPPQ), 680–738 (FHDP…KAPH), and 754–775 (SRLY…EGLG). Over residues 466–477 (KSNSVPCSTKAD) the composition is skewed to polar residues. The segment covering 503–515 (LEEKLPTKNKLET) has biased composition (basic and acidic residues). Positions 517–542 (SVPSLVSIPATSTAKPQSTTSLSNGL) are enriched in polar residues. Residues 705–714 (HLALHLPHSA) show a composition bias toward low complexity.

It belongs to the ZC3H12 family. It depends on Mg(2+) as a cofactor.

Its function is as follows. May function as RNase and regulate the levels of target RNA species. The sequence is that of Probable ribonuclease ZC3H12C (ZC3H12C) from Homo sapiens (Human).